Consider the following 452-residue polypeptide: Mitochondrial import inner membrane translocase subunit TIM44 (452 aa).

Thr128 bears the Phosphothreonine mark. 166 to 173 lines the ATP pocket; that stretch reads SGEKLGKT. Lys177 bears the N6-succinyllysine mark. Residue Ser180 is modified to Phosphoserine. Lys217 is modified (N6-succinyllysine).

It belongs to the Tim44 family. As to quaternary structure, probable component of the PAM complex at least composed of a mitochondrial HSP70 protein, GRPEL1 or GRPEL2, TIMM44, TIMM16/PAM16 and TIMM14/DNAJC19. The complex interacts with the TIMM23 component of the TIM23 complex. Interacts with SLC25A4/ANT1 and SLC25A5/ANT2; leading to inhibit the presequence translocase TIMM23, thereby promoting stabilization of PINK1.

It is found in the mitochondrion inner membrane. Functionally, essential component of the PAM complex, a complex required for the translocation of transit peptide-containing proteins from the inner membrane into the mitochondrial matrix in an ATP-dependent manner. Recruits mitochondrial HSP70 to drive protein translocation into the matrix using ATP as an energy source. This Mus musculus (Mouse) protein is Mitochondrial import inner membrane translocase subunit TIM44 (Timm44).